The following is a 441-amino-acid chain: Transcriptional regulatory protein ZraR (441 aa).

Residues 7–121 form the Response regulatory domain; sequence DILVVDDDVS…RLQETLEKAL (115 aa). The residue at position 56 (Asp-56) is a 4-aspartylphosphate. The region spanning 141–370 is the Sigma-54 factor interaction domain; sequence MIGSSPAMQH…LENAIERAVV (230 aa). Residues Gly-172, Thr-173, Arg-329, and Arg-359 each contribute to the ATP site. The segment at residues 421–440 is a DNA-binding region (H-T-H motif); the sequence is KTEAARQLGITRKTLLAKLS.

In terms of processing, phosphorylated by ZraS.

Its subcellular location is the cytoplasm. With respect to regulation, activity of the ZraS/ZraR two-component system is repressed by the zinc-bound form of ZraP, which probably interacts with the periplasmic region of ZraS. Its function is as follows. Part of the Zra signaling pathway, an envelope stress response (ESR) system composed of the periplasmic accessory protein ZraP, the histidine kinase ZraS and the transcriptional regulator ZraR. The ZraPSR system contributes to antibiotic resistance and is important for membrane integrity in the presence of membrane-targeting biocides. ZraR is a member of the two-component regulatory system ZraS/ZraR. When activated by ZraS, acts in conjunction with sigma-54 to regulate the expression of zraP in the presence of high Zn(2+) or Pb(2+) concentrations. Also positively autoregulates the expression of the zraSR operon. The protein is Transcriptional regulatory protein ZraR (zraR) of Salmonella typhi.